The chain runs to 157 residues: SsrA-binding protein (157 aa).

It belongs to the SmpB family.

The protein resides in the cytoplasm. Required for rescue of stalled ribosomes mediated by trans-translation. Binds to transfer-messenger RNA (tmRNA), required for stable association of tmRNA with ribosomes. tmRNA and SmpB together mimic tRNA shape, replacing the anticodon stem-loop with SmpB. tmRNA is encoded by the ssrA gene; the 2 termini fold to resemble tRNA(Ala) and it encodes a 'tag peptide', a short internal open reading frame. During trans-translation Ala-aminoacylated tmRNA acts like a tRNA, entering the A-site of stalled ribosomes, displacing the stalled mRNA. The ribosome then switches to translate the ORF on the tmRNA; the nascent peptide is terminated with the 'tag peptide' encoded by the tmRNA and targeted for degradation. The ribosome is freed to recommence translation, which seems to be the essential function of trans-translation. The sequence is that of SsrA-binding protein from Aquifex aeolicus (strain VF5).